Reading from the N-terminus, the 243-residue chain is Isoprenyl transferase 2 (243 aa).

D23 is an active-site residue. D23 provides a ligand contact to Mg(2+). Residues 24–27 (GNGR), W28, R36, H40, and 68–70 (STE) contribute to the substrate site. N71 (proton acceptor) is an active-site residue. Substrate is bound by residues W72, R74, R191, and 197-199 (RTS). E210 lines the Mg(2+) pocket.

The protein belongs to the UPP synthase family. As to quaternary structure, homodimer. The cofactor is Mg(2+).

Functionally, catalyzes the condensation of isopentenyl diphosphate (IPP) with allylic pyrophosphates generating different type of terpenoids. This is Isoprenyl transferase 2 from Corynebacterium efficiens (strain DSM 44549 / YS-314 / AJ 12310 / JCM 11189 / NBRC 100395).